The following is a 185-amino-acid chain: Large ribosomal subunit protein uL5 (185 aa).

The protein belongs to the universal ribosomal protein uL5 family. Part of the 50S ribosomal subunit; part of the 5S rRNA/L5/L18/L25 subcomplex. Contacts the 5S rRNA and the P site tRNA. Forms a bridge to the 30S subunit in the 70S ribosome.

This is one of the proteins that bind and probably mediate the attachment of the 5S RNA into the large ribosomal subunit, where it forms part of the central protuberance. In the 70S ribosome it contacts protein S13 of the 30S subunit (bridge B1b), connecting the 2 subunits; this bridge is implicated in subunit movement. Contacts the P site tRNA; the 5S rRNA and some of its associated proteins might help stabilize positioning of ribosome-bound tRNAs. The sequence is that of Large ribosomal subunit protein uL5 from Bartonella bacilliformis (strain ATCC 35685 / KC583 / Herrer 020/F12,63).